Reading from the N-terminus, the 1203-residue chain is ATP-dependent helicase/nuclease subunit A (1203 aa).

The 469-residue stretch at 4-472 (VKLTPEQNEA…IRLKENFRSR (469 aa)) folds into the UvrD-like helicase ATP-binding domain. 25-32 (ASAGSGKT) serves as a coordination point for ATP. The 283-residue stretch at 503–785 (VQGNITDYPV…RVMTFHKSKG (283 aa)) folds into the UvrD-like helicase C-terminal domain.

This sequence belongs to the helicase family. AddA subfamily. In terms of assembly, heterodimer of AddA and AddB/RexB. It depends on Mg(2+) as a cofactor.

The enzyme catalyses Couples ATP hydrolysis with the unwinding of duplex DNA by translocating in the 3'-5' direction.. It carries out the reaction ATP + H2O = ADP + phosphate + H(+). Functionally, the heterodimer acts as both an ATP-dependent DNA helicase and an ATP-dependent, dual-direction single-stranded exonuclease. Recognizes the chi site generating a DNA molecule suitable for the initiation of homologous recombination. The AddA nuclease domain is required for chi fragment generation; this subunit has the helicase and 3' -&gt; 5' nuclease activities. This Lactococcus lactis subsp. lactis (strain IL1403) (Streptococcus lactis) protein is ATP-dependent helicase/nuclease subunit A.